Reading from the N-terminus, the 181-residue chain is Large ribosomal subunit protein uL5 (181 aa).

This sequence belongs to the universal ribosomal protein uL5 family. As to quaternary structure, part of the 50S ribosomal subunit; part of the 5S rRNA/L5/L18/L25 subcomplex. Contacts the 5S rRNA and the P site tRNA. Forms a bridge to the 30S subunit in the 70S ribosome.

Its function is as follows. This is one of the proteins that bind and probably mediate the attachment of the 5S RNA into the large ribosomal subunit, where it forms part of the central protuberance. In the 70S ribosome it contacts protein S13 of the 30S subunit (bridge B1b), connecting the 2 subunits; this bridge is implicated in subunit movement. Contacts the P site tRNA; the 5S rRNA and some of its associated proteins might help stabilize positioning of ribosome-bound tRNAs. In Mycoplasmopsis pulmonis (strain UAB CTIP) (Mycoplasma pulmonis), this protein is Large ribosomal subunit protein uL5.